Reading from the N-terminus, the 388-residue chain is Succinate--CoA ligase [ADP-forming] subunit beta (388 aa).

The ATP-grasp domain maps to 9–244 (KEILRKYGVT…LDEEDPAEIE (236 aa)). Residues lysine 46, 53 to 55 (GRG), glutamate 99, alanine 102, and glutamate 107 contribute to the ATP site. Positions 199 and 213 each coordinate Mg(2+). Substrate contacts are provided by residues asparagine 264 and 321-323 (GIM).

This sequence belongs to the succinate/malate CoA ligase beta subunit family. Heterotetramer of two alpha and two beta subunits. The cofactor is Mg(2+).

It carries out the reaction succinate + ATP + CoA = succinyl-CoA + ADP + phosphate. It catalyses the reaction GTP + succinate + CoA = succinyl-CoA + GDP + phosphate. It participates in carbohydrate metabolism; tricarboxylic acid cycle; succinate from succinyl-CoA (ligase route): step 1/1. In terms of biological role, succinyl-CoA synthetase functions in the citric acid cycle (TCA), coupling the hydrolysis of succinyl-CoA to the synthesis of either ATP or GTP and thus represents the only step of substrate-level phosphorylation in the TCA. The beta subunit provides nucleotide specificity of the enzyme and binds the substrate succinate, while the binding sites for coenzyme A and phosphate are found in the alpha subunit. The polypeptide is Succinate--CoA ligase [ADP-forming] subunit beta (Janthinobacterium sp. (strain Marseille) (Minibacterium massiliensis)).